A 443-amino-acid chain; its full sequence is Tubulin beta chain (443 aa).

GTP is bound by residues glutamine 11, glutamate 69, serine 138, glycine 142, threonine 143, glycine 144, asparagine 204, and asparagine 226. A Mg(2+)-binding site is contributed by glutamate 69. The tract at residues 424–443 is disordered; the sequence is QYQDATAEEEGEFEEEEGEN. Positions 429–443 are enriched in acidic residues; the sequence is TAEEEGEFEEEEGEN.

This sequence belongs to the tubulin family. Dimer of alpha and beta chains. A typical microtubule is a hollow water-filled tube with an outer diameter of 25 nm and an inner diameter of 15 nM. Alpha-beta heterodimers associate head-to-tail to form protofilaments running lengthwise along the microtubule wall with the beta-tubulin subunit facing the microtubule plus end conferring a structural polarity. Microtubules usually have 13 protofilaments but different protofilament numbers can be found in some organisms and specialized cells. Mg(2+) is required as a cofactor. Some glutamate residues at the C-terminus are either polyglutamylated or polyglycylated. These 2 modifications occur exclusively on glutamate residues and result in either polyglutamate or polyglycine chains on the gamma-carboxyl group. Both modifications can coexist on the same protein on adjacent residues, and lowering polyglycylation levels increases polyglutamylation, and reciprocally. The precise function of such modifications is still unclear but they regulate the assembly and dynamics of axonemal microtubules.

The protein resides in the cytoplasm. Its subcellular location is the cytoskeleton. Functionally, tubulin is the major constituent of microtubules, a cylinder consisting of laterally associated linear protofilaments composed of alpha- and beta-tubulin heterodimers. Microtubules grow by the addition of GTP-tubulin dimers to the microtubule end, where a stabilizing cap forms. Below the cap, tubulin dimers are in GDP-bound state, owing to GTPase activity of alpha-tubulin. This is Tubulin beta chain (BTU1) from Tetrahymena thermophila.